The chain runs to 345 residues: Methionine import ATP-binding protein MetN 2 (345 aa).

Residues 4–243 (IELRHVKKEF…PQTEIAKRFI (240 aa)) form the ABC transporter domain. 40–47 (GYSGAGKS) is an ATP binding site.

This sequence belongs to the ABC transporter superfamily. Methionine importer (TC 3.A.1.24) family. In terms of assembly, the complex is composed of two ATP-binding proteins (MetN), two transmembrane proteins (MetI) and a solute-binding protein (MetQ).

The protein resides in the cell membrane. The catalysed reaction is L-methionine(out) + ATP + H2O = L-methionine(in) + ADP + phosphate + H(+). It carries out the reaction D-methionine(out) + ATP + H2O = D-methionine(in) + ADP + phosphate + H(+). In terms of biological role, part of the ABC transporter complex MetNIQ involved in methionine import. Responsible for energy coupling to the transport system. The chain is Methionine import ATP-binding protein MetN 2 from Enterococcus faecalis (strain ATCC 700802 / V583).